The chain runs to 424 residues: Tyrosine--tRNA ligase (424 aa).

Y37 contributes to the L-tyrosine binding site. The 'HIGH' region motif lies at 42–51 (PTADSLHLGH). Positions 175 and 179 each coordinate L-tyrosine. The short motif at 235–239 (KFGKT) is the 'KMSKS' region element. Residue K238 coordinates ATP. Positions 357 to 414 (ADLMQALVDAELQPSRGQARKTIASNAVTINGEKQSDPEYIFNDEDRLFGRYTLLRRG) constitute an S4 RNA-binding domain.

Belongs to the class-I aminoacyl-tRNA synthetase family. TyrS type 1 subfamily. As to quaternary structure, homodimer.

Its subcellular location is the cytoplasm. The enzyme catalyses tRNA(Tyr) + L-tyrosine + ATP = L-tyrosyl-tRNA(Tyr) + AMP + diphosphate + H(+). Functionally, catalyzes the attachment of tyrosine to tRNA(Tyr) in a two-step reaction: tyrosine is first activated by ATP to form Tyr-AMP and then transferred to the acceptor end of tRNA(Tyr). The chain is Tyrosine--tRNA ligase from Salmonella agona (strain SL483).